Reading from the N-terminus, the 624-residue chain is Ubiquitin carboxyl-terminal hydrolase 16 (624 aa).

The region spanning 46–620 is the USP domain; sequence VGLSNPANDC…EVYLLFYEIE (575 aa). The Nucleophile role is filled by Cys-55. His-424 (proton acceptor) is an active-site residue. Residues 453–573 are disordered; it reads SENPSRVASP…ATDTEASASA (121 aa). The segment covering 479–496 has biased composition (low complexity); it reads SPPASTSTNSPLSLTPDS. The span at 518 to 544 shows a compositional bias: polar residues; it reads VSFQSTHSSSKQTISPTSAARNSSSLD. Positions 546-573 are enriched in low complexity; the sequence is ARLSSPASRSSLAERNASATDTEASASA.

Belongs to the peptidase C19 family.

It carries out the reaction Thiol-dependent hydrolysis of ester, thioester, amide, peptide and isopeptide bonds formed by the C-terminal Gly of ubiquitin (a 76-residue protein attached to proteins as an intracellular targeting signal).. The sequence is that of Ubiquitin carboxyl-terminal hydrolase 16 (ubp16) from Emericella nidulans (strain FGSC A4 / ATCC 38163 / CBS 112.46 / NRRL 194 / M139) (Aspergillus nidulans).